The sequence spans 206 residues: Ribosome maturation factor RimP (206 aa).

The protein belongs to the RimP family.

Its subcellular location is the cytoplasm. Required for maturation of 30S ribosomal subunits. The protein is Ribosome maturation factor RimP of Paracoccus denitrificans (strain Pd 1222).